The sequence spans 294 residues: Protoheme IX farnesyltransferase (294 aa).

The next 9 helical transmembrane spans lie at Val-22–Pro-42, Ile-46–Cys-66, Ile-89–Leu-109, Leu-116–Leu-136, Asn-143–Ala-163, Ala-170–Leu-190, Phe-212–Phe-232, Val-234–Trp-254, and Phe-272–Leu-292.

Belongs to the UbiA prenyltransferase family. Protoheme IX farnesyltransferase subfamily.

The protein localises to the cell inner membrane. It carries out the reaction heme b + (2E,6E)-farnesyl diphosphate + H2O = Fe(II)-heme o + diphosphate. It functions in the pathway porphyrin-containing compound metabolism; heme O biosynthesis; heme O from protoheme: step 1/1. Converts heme B (protoheme IX) to heme O by substitution of the vinyl group on carbon 2 of heme B porphyrin ring with a hydroxyethyl farnesyl side group. This Janthinobacterium sp. (strain Marseille) (Minibacterium massiliensis) protein is Protoheme IX farnesyltransferase.